Here is a 133-residue protein sequence, read N- to C-terminus: Interferon alpha-inducible protein 27-like protein 2 (133 aa).

Helical transmembrane passes span 8-28 (AAIG…AVGF), 51-71 (GGGV…AAGL), and 73-93 (TSSN…LGGA). Positions 93-133 (AKRASPSPPPGGPRPEGEQPGENVPQVEPPKSPLGPEKHEK) are disordered.

It belongs to the IFI6/IFI27 family.

Its subcellular location is the mitochondrion membrane. In terms of biological role, plays a role in the apoptotic process and has a pro-apoptotic activity. The chain is Interferon alpha-inducible protein 27-like protein 2 from Bos taurus (Bovine).